The primary structure comprises 661 residues: Sperm transmembrane protein 9 (661 aa).

The signal sequence occupies residues 1 to 16 (MNVILVLVVLFFAGDC). Over 17–618 (AKIRKIIDFL…MTNRLMKNYE (602 aa)) the chain is Extracellular. An EGF-like 1 domain is found at 52–90 (NFNPCLENPKICSNRGKCLHENGNFYCICPVTHYGKTCE). 3 disulfides stabilise this stretch: cysteine 56–cysteine 69, cysteine 63–cysteine 78, and cysteine 80–cysteine 89. 4 N-linked (GlcNAc...) asparagine glycosylation sites follow: asparagine 105, asparagine 106, asparagine 134, and asparagine 190. The EGF-like 2 domain maps to 210 to 259 (QISACFDTQCDNGGICEDVVDWKTKTVTATCKCPSAIELIGGTVTGENCE). Cystine bridges form between cysteine 214–cysteine 225, cysteine 219–cysteine 240, and cysteine 242–cysteine 258. N-linked (GlcNAc...) asparagine glycosylation is found at asparagine 279, asparagine 290, asparagine 316, and asparagine 338. The Cell attachment site motif lies at 377–379 (RGD). EGF-like domains follow at residues 377-414 (RGDR…EKCE), 519-557 (HTNP…SLCE), and 559-600 (VDDS…LDCN). 9 cysteine pairs are disulfide-bonded: cysteine 385/cysteine 402, cysteine 393/cysteine 404, cysteine 413/cysteine 419, cysteine 523/cysteine 534, cysteine 528/cysteine 545, cysteine 547/cysteine 556, cysteine 563/cysteine 576, cysteine 571/cysteine 588, and cysteine 590/cysteine 599. Asparagine 549 is a glycosylation site (N-linked (GlcNAc...) asparagine). The helical transmembrane segment at 619–639 (FSLPLVACFVSLAILLPVIVI) threads the bilayer. Topologically, residues 640 to 661 (SRRRQGRVEEAKKTSEVKTENP) are cytoplasmic.

Expressed in spermatids, during spermogenesis expression is primarily localized to the pseudopod.

The protein resides in the cytoplasm. Its subcellular location is the membrane. In terms of biological role, required for fertilization. May be required for cell adhesion and/or function as a signaling molecule. This chain is Sperm transmembrane protein 9 (spe-9), found in Caenorhabditis elegans.